The chain runs to 155 residues: Perlucin (155 aa).

Disulfide bonds link cysteine 2/cysteine 13, cysteine 30/cysteine 127, and cysteine 102/cysteine 119. One can recognise a C-type lectin domain in the interval 9 to 128 (NRRSCYWFST…CQKPSHFICE (120 aa)). An N-linked (GlcNAc...) asparagine glycan is attached at asparagine 84. 2 tandem repeats follow at residues 136–145 (NSLHANLQQR) and 146–155 (DSLHANLQQR).

In terms of processing, glycosylated.

Functionally, may promote nucleation and/or growth of calcium carbonate crystals. Binds to D-galactose and D-mannose/D-glucose. The protein is Perlucin of Haliotis laevigata (Smooth Australian abalone).